Reading from the N-terminus, the 331-residue chain is Ketol-acid reductoisomerase (NADP(+)) (331 aa).

Residues 2–182 (AQLFYDSDAD…GGTRAGILET (181 aa)) form the KARI N-terminal Rossmann domain. Residues 25 to 28 (YGSQ), S51, S53, and 83 to 86 (DEFQ) each bind NADP(+). The active site involves H108. An NADP(+)-binding site is contributed by G134. A KARI C-terminal knotted domain is found at 183–328 (NFKEETETDL…KGLRAMFSWL (146 aa)). Residues D191, E195, E227, and E231 each contribute to the Mg(2+) site. S252 is a substrate binding site.

The protein belongs to the ketol-acid reductoisomerase family. Requires Mg(2+) as cofactor.

The enzyme catalyses (2R)-2,3-dihydroxy-3-methylbutanoate + NADP(+) = (2S)-2-acetolactate + NADPH + H(+). It catalyses the reaction (2R,3R)-2,3-dihydroxy-3-methylpentanoate + NADP(+) = (S)-2-ethyl-2-hydroxy-3-oxobutanoate + NADPH + H(+). Its pathway is amino-acid biosynthesis; L-isoleucine biosynthesis; L-isoleucine from 2-oxobutanoate: step 2/4. It functions in the pathway amino-acid biosynthesis; L-valine biosynthesis; L-valine from pyruvate: step 2/4. Involved in the biosynthesis of branched-chain amino acids (BCAA). Catalyzes an alkyl-migration followed by a ketol-acid reduction of (S)-2-acetolactate (S2AL) to yield (R)-2,3-dihydroxy-isovalerate. In the isomerase reaction, S2AL is rearranged via a Mg-dependent methyl migration to produce 3-hydroxy-3-methyl-2-ketobutyrate (HMKB). In the reductase reaction, this 2-ketoacid undergoes a metal-dependent reduction by NADPH to yield (R)-2,3-dihydroxy-isovalerate. This is Ketol-acid reductoisomerase (NADP(+)) from Prochlorococcus marinus (strain MIT 9313).